A 757-amino-acid chain; its full sequence is Amine oxidase [copper-containing] 2 (757 aa).

Residues 1-4 (MNLK) are Cytoplasmic-facing. The helical transmembrane segment at 5 to 25 (VLLLLLGLSFLTVFALVYVLL) threads the bilayer. The Extracellular segment spans residues 26-757 (TRQGSFSQSP…NLPSFSYEGL (732 aa)). N-linked (GlcNAc...) asparagine glycans are attached at residues N133, N198, and N226. D381 acts as the Proton acceptor in catalysis. C399 and C425 are disulfide-bonded. Y466 serves as the catalytic Schiff-base intermediate with substrate; via topaquinone. Y466 carries the 2',4',5'-topaquinone modification. Cu(2+) contacts are provided by H517 and H519. 7 residues coordinate Ca(2+): D526, L527, D528, E569, E638, F660, and N662. N663 is a glycosylation site (N-linked (GlcNAc...) asparagine). Ca(2+)-binding residues include E664, D670, and L671. H681 lines the Cu(2+) pocket. A disulfide bridge connects residues C731 and C738.

This sequence belongs to the copper/topaquinone oxidase family. Homodimer; disulfide-linked. Probably forms heterodimers with AOC3. It depends on Cu(2+) as a cofactor. Ca(2+) is required as a cofactor. Requires L-topaquinone as cofactor. Post-translationally, topaquinone (TPQ) is generated by copper-dependent autoxidation of a specific tyrosyl residue. In terms of tissue distribution, significantly much highly expressed in retina.

It localises to the cell membrane. The catalysed reaction is 2-phenylethylamine + O2 + H2O = 2-phenylacetaldehyde + H2O2 + NH4(+). The enzyme catalyses tryptamine + O2 + H2O = indole-3-acetaldehyde + H2O2 + NH4(+). It carries out the reaction tyramine + O2 + H2O = (4-hydroxyphenyl)acetaldehyde + H2O2 + NH4(+). Its function is as follows. Catalyzes the oxidative deamination of primary amines to the corresponding aldehydes with the concomitant production of hydrogen peroxide and ammonia. Has a preference for 2-phenylethylamine, tryptamine and tyramine. Could also act on methylamine and benzylamine but much less efficiently. The sequence is that of Amine oxidase [copper-containing] 2 from Mus musculus (Mouse).